We begin with the raw amino-acid sequence, 72 residues long: MFTMKKSLLLLFFLGMISLSLCEQERGADEDEGEVEEQIKRSIWEGIKNAGKGFLVSILDKVRCKVAGGCNP.

The first 22 residues, 1–22 (MFTMKKSLLLLFFLGMISLSLC), serve as a signal peptide directing secretion. Residues 23–42 (EQERGADEDEGEVEEQIKRS) constitute a propeptide that is removed on maturation. C64 and C70 form a disulfide bridge.

In terms of tissue distribution, expressed by the skin glands.

It localises to the secreted. Antimicrobial peptide. Active against the Gram-positive bacteria S.aureus FDA209P (MIC=9.8 ug/ml) and B.subtilis ATCC 6633 (MIC&gt;64 ug/ml), and the Gram-negative bacteria E.coli O111 (MIC=19.6 ug/ml) and E.coli ATCC 25922 (MIC=9.8 ug/ml). Not active against the fungus C.albicans. This Sylvirana guentheri (Gunther's frog) protein is Brevinin-2GHc.